Here is a 109-residue protein sequence, read N- to C-terminus: uncharacterized protein (109 aa).

The first 19 residues, 1–19, serve as a signal peptide directing secretion; the sequence is MKKFALLAGLFVFAPMTWA.

This is an uncharacterized protein from Escherichia coli O6:H1 (strain CFT073 / ATCC 700928 / UPEC).